A 676-amino-acid polypeptide reads, in one-letter code: Nicastrin (676 aa).

Residues 1–28 form the signal peptide; the sequence is MAMGLIRLLSIAFTLVLLSILPLHLSLA. Topologically, residues 29-644 are extracellular; sequence DEITSIESVP…VYTVQHSAYD (616 aa). 7 N-linked (GlcNAc...) asparagine glycosylation sites follow: N58, N336, N371, N444, N480, N555, and N611. A helical membrane pass occupies residues 645 to 665; sequence NAVLVAGITVTTLAYIGILAA. The Cytoplasmic portion of the chain corresponds to 666 to 676; it reads KSIITKALKQD.

It belongs to the nicastrin family. In terms of assembly, probable component of the gamma-secretase complex, a complex composed of a presenilin homodimer, nicastrin, APH1 and PEN2.

The protein localises to the membrane. In terms of biological role, probable subunit of the gamma-secretase complex, an endoprotease complex that catalyzes the intramembrane cleavage of integral membrane proteins such as Notch. The chain is Nicastrin from Arabidopsis thaliana (Mouse-ear cress).